Consider the following 676-residue polypeptide: Protein cereblon (676 aa).

A compositionally biased stretch (acidic residues) spans Met1–Glu11. Disordered stretches follow at residues Met1–His78, Glu118–Arg194, and Asp249–Asp276. Low complexity-rich tracts occupy residues Thr12–Ala33 and Val125–Ala139. The span at Leu156–Ser177 shows a compositional bias: polar residues. The Lon N-terminal domain occupies Arg314 to Ser542. Residues Glu541–Lys650 form the CULT domain. Zn(2+)-binding residues include Cys546, Cys549, Cys615, and Cys618.

Belongs to the CRBN family. In terms of assembly, likely a component of a DCX (DDB1-CUL4-X-box) protein ligase complex. May interact with pic/DDB1. Post-translationally, ubiquitinated.

Its subcellular location is the nucleus. It functions in the pathway protein modification; protein ubiquitination. Functionally, substrate recognition component of a DCX (DDB1-CUL4-X-box) E3 protein ligase complex that mediates the ubiquitination and subsequent proteasomal degradation of target proteins. Has an essential role in mediating growth by negatively regulating insulin signaling. It also has a role in maintaining presynaptic function in the neuromuscular junction synapses of third-instar larvae. This Drosophila mojavensis (Fruit fly) protein is Protein cereblon.